The primary structure comprises 1581 residues: Mediator of RNA polymerase II transcription subunit 1 (1581 aa).

The segment at 1–670 (MKAQGETEES…YGSSPLERQN (670 aa)) is interaction with the Mediator complex and THRA. Residues 16–590 (MSSLLERLHA…SIKDRHESVG (575 aa)) are interaction with ESR1. Interaction with the Mediator complex stretches follow at residues 108–212 (FYVE…GYLT) and 215–390 (SGGH…SLQG). The tract at residues 405–644 (PLILNLIRHQ…MAGNTKNHPM (240 aa)) is interaction with THRA. Residues 542 to 788 (PASSPGYGMT…TDILSDIAEE (247 aa)) are interaction with VDR. A Phosphoserine modification is found at serine 588. The LXXLL motif 1 motif lies at 604-608 (LTSLL). Disordered stretches follow at residues 609–705 (QITG…HQTE), 791–819 (KLPS…QSTL), 868–895 (LSNS…DDFK), and 947–1566 (EHHS…DFMI). Over residues 622–632 (PTPPHHTPPPV) the composition is skewed to pro residues. The interval 622 to 701 (PTPPHHTPPP…SSRLPPEKPK (80 aa)) is interaction with PPARGC1A and THRA. The LXXLL motif 2 signature appears at 645 to 649 (LMNLL). Residues 655-675 (QDFSTLYGSSPLERQNSSSGS) show a composition bias toward polar residues. The tract at residues 656-1065 (DFSTLYGSSP…TPPIPKITIQ (410 aa)) is interaction with ESR1. Phosphoserine is present on serine 664. Positions 681-715 (CSGSNKTKKKESSRLPPEKPKHQTEDDFQRELFSM) are interaction with GATA1. Over residues 690–705 (KESSRLPPEKPKHQTE) the composition is skewed to basic and acidic residues. Residue serine 794 is modified to Phosphoserine. The residue at position 804 (threonine 804) is a Phosphothreonine. The span at 807-819 (RDSSSSGHSQSTL) shows a compositional bias: polar residues. The Integrase domain-binding motif (IBM) signature appears at 874-901 (QSGFGEEYFDESSQSGDNDDFKGFASQA). 2 positions are modified to phosphoserine: serine 886 and serine 952. Residues 962–973 (LGKEKTQKRVKE) show a composition bias toward basic and acidic residues. Threonine 1031 carries the post-translational modification Phosphothreonine; by MAPK1 or MAPK3. The segment covering 1033–1050 (PTSTGGSKSPGSSGRSQT) has biased composition (low complexity). Threonine 1050 and threonine 1056 each carry phosphothreonine. Low complexity-rich tracts occupy residues 1077–1093 (SSHS…SSGS), 1100–1111 (SSSSSSSSASTS), and 1119–1156 (SEGS…PGSS). Serine 1156 carries the post-translational modification Phosphoserine. A compositionally biased stretch (polar residues) spans 1162 to 1195 (GLSSGSSSTKMKPQGKPSSLMNPSLSKPNISPSH). The residue at position 1177 (lysine 1177) is an N6-acetyllysine. Serine 1207 carries the phosphoserine modification. Phosphothreonine is present on threonine 1215. Low complexity-rich tracts occupy residues 1218 to 1227 (SSKAKSPISS) and 1234 to 1293 (MSGT…SKGK). Serine 1223 carries the phosphoserine modification. The segment at 1249–1421 (LGSSGSLSQK…KPGESSGEGL (173 aa)) is interaction with TP53. Serine 1302 is modified (phosphoserine). Residues 1330–1345 (GVSTNSSSHPMSSKHN) show a composition bias toward polar residues. Residue serine 1347 is modified to Phosphoserine. The segment covering 1352–1364 (QGKREKSDKDKSK) has biased composition (basic and acidic residues). Serine 1403 and serine 1433 each carry phosphoserine. Composition is skewed to polar residues over residues 1425 to 1440 (MASS…SGST) and 1448 to 1482 (PSHS…SPSS). The residue at position 1440 (threonine 1440) is a Phosphothreonine. A Phosphothreonine; by MAPK1 or MAPK3 modification is found at threonine 1457. Phosphoserine is present on residues serine 1463, serine 1465, serine 1479, serine 1481, and serine 1482. Over residues 1496–1505 (KHKKHKKEKK) the composition is skewed to basic residues. The segment covering 1506–1522 (KVKDKDRDRDRDKDRDK) has biased composition (basic and acidic residues). Lysine 1529 bears the N6-acetyllysine mark. Over residues 1533 to 1552 (WSKSPISSDQSLSMTSNTIL) the composition is skewed to polar residues.

This sequence belongs to the Mediator complex subunit 1 family. As to quaternary structure, component of the Mediator complex, which is composed of MED1, MED4, MED6, MED7, MED8, MED9, MED10, MED11, MED12, MED13, MED13L, MED14, MED15, MED16, MED17, MED18, MED19, MED20, MED21, MED22, MED23, MED24, MED25, MED26, MED27, MED29, MED30, MED31, CCNC, CDK8 and CDC2L6/CDK11. The MED12, MED13, CCNC and CDK8 subunits form a distinct module termed the CDK8 module. Mediator containing the CDK8 module is less active than Mediator lacking this module in supporting transcriptional activation. Individual preparations of the Mediator complex lacking one or more distinct subunits have been variously termed ARC, CRSP, DRIP, PC2, SMCC and TRAP. This subunit specifically interacts with a number of nuclear receptors in a ligand-dependent fashion including AR, ESR1, ESR2, PPARA, PPARG, RORA, RXRA, RXRG, THRA, THRB and VDR. Interacts with CTNNB1, GABPA, GLI3, PPARGC1A and TP53. Interacts with GATA1 and YWHAH. Interacts with CLOCK; this interaction requires the presence of THRAP3. Interacts with CCAR1. Interacts with NR4A3. Interacts (via IBM motif) with PSIP1 (via IBD domain); phosphorylation increases its affinity for PSIP1. Interacts with USP22. In terms of processing, phosphorylated by MAPK1 or MAPK3 during G2/M phase which may enhance protein stability and promote entry into the nucleolus. Phosphorylation increases its interaction with PSIP1.

Its subcellular location is the nucleus. Component of the Mediator complex, a coactivator involved in the regulated transcription of nearly all RNA polymerase II-dependent genes. Mediator functions as a bridge to convey information from gene-specific regulatory proteins to the basal RNA polymerase II transcription machinery. Mediator is recruited to promoters by direct interactions with regulatory proteins and serves as a scaffold for the assembly of a functional preinitiation complex with RNA polymerase II and the general transcription factors. Acts as a coactivator for GATA1-mediated transcriptional activation during erythroid differentiation of K562 erythroleukemia cells. The sequence is that of Mediator of RNA polymerase II transcription subunit 1 (MED1) from Pongo abelii (Sumatran orangutan).